The sequence spans 311 residues: GTP cyclohydrolase FolE2 (311 aa).

Belongs to the GTP cyclohydrolase IV family.

It catalyses the reaction GTP + H2O = 7,8-dihydroneopterin 3'-triphosphate + formate + H(+). Its pathway is cofactor biosynthesis; 7,8-dihydroneopterin triphosphate biosynthesis; 7,8-dihydroneopterin triphosphate from GTP: step 1/1. Converts GTP to 7,8-dihydroneopterin triphosphate. In Xanthomonas campestris pv. campestris (strain 8004), this protein is GTP cyclohydrolase FolE2.